A 581-amino-acid polypeptide reads, in one-letter code: Proline--tRNA ligase (581 aa).

The protein belongs to the class-II aminoacyl-tRNA synthetase family. ProS type 1 subfamily. In terms of assembly, homodimer.

The protein localises to the cytoplasm. It carries out the reaction tRNA(Pro) + L-proline + ATP = L-prolyl-tRNA(Pro) + AMP + diphosphate. Functionally, catalyzes the attachment of proline to tRNA(Pro) in a two-step reaction: proline is first activated by ATP to form Pro-AMP and then transferred to the acceptor end of tRNA(Pro). As ProRS can inadvertently accommodate and process non-cognate amino acids such as alanine and cysteine, to avoid such errors it has two additional distinct editing activities against alanine. One activity is designated as 'pretransfer' editing and involves the tRNA(Pro)-independent hydrolysis of activated Ala-AMP. The other activity is designated 'posttransfer' editing and involves deacylation of mischarged Ala-tRNA(Pro). The misacylated Cys-tRNA(Pro) is not edited by ProRS. The chain is Proline--tRNA ligase from Chlamydia trachomatis serovar A (strain ATCC VR-571B / DSM 19440 / HAR-13).